Here is a 515-residue protein sequence, read N- to C-terminus: Peroxisomal catalase A (515 aa).

The residue at position 2 (S2) is an N-acetylserine. Active-site residues include H70 and N143. Heme is bound at residue Y355. The Microbody targeting signal signature appears at 513–515 (SKF).

Belongs to the catalase family. Homotetramer. The cofactor is heme.

The protein localises to the peroxisome matrix. The catalysed reaction is 2 H2O2 = O2 + 2 H2O. Catalyzes the degradation of hydrogen peroxide (H(2)O(2)) generated by peroxisomal oxidases to water and oxygen, thereby protecting cells from the toxic effects of hydrogen peroxide. This Saccharomyces cerevisiae (strain ATCC 204508 / S288c) (Baker's yeast) protein is Peroxisomal catalase A (CTA1).